A 677-amino-acid chain; its full sequence is Transketolase (677 aa).

His27 provides a ligand contact to substrate. Residues His66 and 114-116 each bind thiamine diphosphate; that span reads GPL. Mg(2+) is bound at residue Asp155. Gly156 and Asn185 together coordinate thiamine diphosphate. The Mg(2+) site is built by Asn185 and Ile187. The substrate site is built by His261, Arg356, and Ser383. A thiamine diphosphate-binding site is contributed by His261. The thiamine diphosphate site is built by Glu415 and Phe442. Residue Glu415 is the Proton donor of the active site. The substrate site is built by His466, Asp474, and Arg525.

It belongs to the transketolase family. In terms of assembly, homodimer. Requires Mg(2+) as cofactor. Ca(2+) is required as a cofactor. The cofactor is Mn(2+). It depends on Co(2+) as a cofactor. Thiamine diphosphate serves as cofactor.

The catalysed reaction is D-sedoheptulose 7-phosphate + D-glyceraldehyde 3-phosphate = aldehydo-D-ribose 5-phosphate + D-xylulose 5-phosphate. Functionally, catalyzes the transfer of a two-carbon ketol group from a ketose donor to an aldose acceptor, via a covalent intermediate with the cofactor thiamine pyrophosphate. This chain is Transketolase (TKT), found in Scheffersomyces stipitis (strain ATCC 58785 / CBS 6054 / NBRC 10063 / NRRL Y-11545) (Yeast).